Consider the following 402-residue polypeptide: E3 ubiquitin-protein ligase makorin-2 (402 aa).

3 consecutive C3H1-type zinc fingers follow at residues 2 to 29 (TTKQVTCRYFLHGVCREGNHCQFSHDPS), 31 to 58 (SKPSTICKFYQRGTCAYGERCRYDHVKL), and 141 to 168 (QDLPRLCPYAAVGHCYYEENCIYLHGDK). Residues 169-198 (CEVCGLQVLDPHNPEQRSMHEKMCLLAFEA) are makorin-type Cys-His. Residues 214–268 (CSICMEVVVQKMNPSDRRFGILSSCCHVFCLACIRKWRCTRNFSNKIIKSCPECR) form an RING-type zinc finger. The C3H1-type 4 zinc-finger motif lies at 297–326 (GVGKKPCKYFDQGRGSCPFGGKCLYLHALP).

The protein localises to the cytoplasm. Its subcellular location is the nucleus. The catalysed reaction is S-ubiquitinyl-[E2 ubiquitin-conjugating enzyme]-L-cysteine + [acceptor protein]-L-lysine = [E2 ubiquitin-conjugating enzyme]-L-cysteine + N(6)-ubiquitinyl-[acceptor protein]-L-lysine.. It functions in the pathway protein modification; protein ubiquitination. In terms of biological role, E3 ubiquitin ligase catalyzing the covalent attachment of ubiquitin moieties onto substrate proteins. Inhibits neurogenesis and axis formation during embryonic development by modulating the phosphatidylinositol 3-kinase (PI3K) pathway. Acts downstream of PI3K and akt1 to up-regulate gsk3b mRNA expression. The chain is E3 ubiquitin-protein ligase makorin-2 from Takifugu rubripes (Japanese pufferfish).